A 385-amino-acid chain; its full sequence is Phosphorylated adapter RNA export protein (385 aa).

Residues Met-1 to Ser-18 show a composition bias toward acidic residues. Residues Met-1–Pro-28 are disordered. Ala-2 is subject to N-acetylalanine. A necessary for interaction with CBP80 region spans residues Ala-2–Leu-320. Ser-14, Ser-16, Ser-56, Ser-57, Ser-60, and Ser-63 each carry phosphoserine. Residues Lys-71–Arg-74 carry the Nuclear localization signal motif. Residues Gln-75–Gly-101 form a disordered region. A Nuclear export signal motif is present at residues Val-120–Met-129. Residues Lys-164–Gly-184 show a composition bias toward basic and acidic residues. The segment at Lys-164–Arg-192 is disordered. The short motif at Lys-189 to Arg-192 is the Nuclear localization signal element. The interval Glu-219–Gln-319 is sufficient for poly U RNA-binding. The necessary for poly U RNA-binding and snRNA export stretch occupies residues Gly-270–Gly-278. Thr-287 is modified (phosphothreonine). Residues Gln-335–Phe-385 form a disordered region. The span at Glu-343–Ala-352 shows a compositional bias: polar residues. Ser-347 is subject to Phosphoserine. The span at Gly-364–Phe-385 shows a compositional bias: basic and acidic residues.

It belongs to the PHAX family. As to quaternary structure, found in a U snRNA export complex with PHAX/RNUXA, NCBP1/CBP80, NCBP2/CBP20, RAN, XPO1 and m7G-capped RNA. Part of a precomplex with PHAX/RNUXA, NCBP1/CBP80, NCBP2/CBP20 and m7G-capped RNA. Interacts with NCBP1/CBP80. Found in a complex with snoRNA. Interacts with NCBP2/CBP20. Interacts with DDX39A; this interaction stimulates PHAX RNA binding activity. Post-translationally, phosphorylated in the nucleus. Dephosphorylated in the cytoplasm.

It localises to the nucleus. Its subcellular location is the nucleoplasm. The protein resides in the cajal body. The protein localises to the cytoplasm. In terms of biological role, a phosphoprotein adapter involved in the XPO1-mediated U snRNA export from the nucleus. Bridge components required for U snRNA export, the cap binding complex (CBC)-bound snRNA on the one hand and the GTPase Ran in its active GTP-bound form together with the export receptor XPO1 on the other. Its phosphorylation in the nucleus is required for U snRNA export complex assembly and export, while its dephosphorylation in the cytoplasm causes export complex disassembly. It is recycled back to the nucleus via the importin alpha/beta heterodimeric import receptor. The directionality of nuclear export is thought to be conferred by an asymmetric distribution of the GTP- and GDP-bound forms of Ran between the cytoplasm and nucleus. Its compartmentalized phosphorylation cycle may also contribute to the directionality of export. Binds strongly to m7G-capped U1 and U5 small nuclear RNAs (snRNAs) in a sequence-unspecific manner and phosphorylation-independent manner. Also plays a role in the biogenesis of U3 small nucleolar RNA (snoRNA). Involved in the U3 snoRNA transport from nucleoplasm to Cajal bodies. Binds strongly to m7G-capped U3, U8 and U13 precursor snoRNAs and weakly to trimethylated (TMG)-capped U3, U8 and U13 snoRNAs. Also binds to telomerase RNA. The protein is Phosphorylated adapter RNA export protein (Phax) of Mus musculus (Mouse).